The primary structure comprises 475 residues: Ribulose bisphosphate carboxylase large chain (475 aa).

Positions 1–2 (MS) are excised as a propeptide. P3 carries the N-acetylproline modification. K14 carries the N6,N6,N6-trimethyllysine modification. Substrate is bound by residues N123 and T173. K175 (proton acceptor) is an active-site residue. Residue K177 participates in substrate binding. Residues K201, D203, and E204 each coordinate Mg(2+). K201 carries the post-translational modification N6-carboxylysine. H294 (proton acceptor) is an active-site residue. Residues R295, H327, and S379 each contribute to the substrate site.

This sequence belongs to the RuBisCO large chain family. Type I subfamily. In terms of assembly, heterohexadecamer of 8 large chains and 8 small chains; disulfide-linked. The disulfide link is formed within the large subunit homodimers. Mg(2+) serves as cofactor. In terms of processing, the disulfide bond which can form in the large chain dimeric partners within the hexadecamer appears to be associated with oxidative stress and protein turnover.

Its subcellular location is the plastid. It localises to the chloroplast. The enzyme catalyses 2 (2R)-3-phosphoglycerate + 2 H(+) = D-ribulose 1,5-bisphosphate + CO2 + H2O. It catalyses the reaction D-ribulose 1,5-bisphosphate + O2 = 2-phosphoglycolate + (2R)-3-phosphoglycerate + 2 H(+). RuBisCO catalyzes two reactions: the carboxylation of D-ribulose 1,5-bisphosphate, the primary event in carbon dioxide fixation, as well as the oxidative fragmentation of the pentose substrate in the photorespiration process. Both reactions occur simultaneously and in competition at the same active site. The chain is Ribulose bisphosphate carboxylase large chain from Atriplex rosea (Red orache).